The following is a 240-amino-acid chain: MLPFWIALQFLSSLPVSLPGMPAPREVGRSLLYYPLVGLLFGLLLWLASHLLQGTPSPLHAALLLTLWVLLSGALHLDGLADSADAWLGGFGDRERTLRIMKDPRSGPIAVVTLVLVLLLKFCALWVLVGQGIGAQLLLAPLIGRAAMLGLFLCTPYVRPGGLGQALAEHMPRRAAGWVLLVCVLFCLFLGGWSVLLALAVFAWLRHLMCRRLGGTTGDTAGALLELLELAVVLGLALGL.

Helical transmembrane passes span 31-51 (LLYY…ASHL), 62-81 (ALLL…DGLA), 109-129 (IAVV…WVLV), 133-153 (IGAQ…GLFL), and 179-199 (VLLV…LLAL).

This sequence belongs to the CobS family. Mg(2+) serves as cofactor.

It localises to the cell inner membrane. It carries out the reaction alpha-ribazole + adenosylcob(III)inamide-GDP = adenosylcob(III)alamin + GMP + H(+). It catalyses the reaction alpha-ribazole 5'-phosphate + adenosylcob(III)inamide-GDP = adenosylcob(III)alamin 5'-phosphate + GMP + H(+). It functions in the pathway cofactor biosynthesis; adenosylcobalamin biosynthesis; adenosylcobalamin from cob(II)yrinate a,c-diamide: step 7/7. In terms of biological role, joins adenosylcobinamide-GDP and alpha-ribazole to generate adenosylcobalamin (Ado-cobalamin). Also synthesizes adenosylcobalamin 5'-phosphate from adenosylcobinamide-GDP and alpha-ribazole 5'-phosphate. In Pseudomonas putida (strain ATCC 47054 / DSM 6125 / CFBP 8728 / NCIMB 11950 / KT2440), this protein is Adenosylcobinamide-GDP ribazoletransferase.